A 229-amino-acid polypeptide reads, in one-letter code: Secreted RxLR effector protein PITG_22926 (229 aa).

A signal peptide spans 1-23; sequence MRCNHTLCVVAITFLVSWSQTLS. The RxLR-dEER signature appears at 34-45; the sequence is PLVRSVSATEER.

The protein belongs to the RxLR effector family.

Its subcellular location is the secreted. The protein localises to the host nucleus. Functionally, secreted effector that acts as a RNA silencing suppressor, probably by inhibiting the biogenesis of small RNAs in the host plant, to manipulate host immune responses and promote Phytophthora infection. The chain is Secreted RxLR effector protein PITG_22926 from Phytophthora infestans (strain T30-4) (Potato late blight agent).